Reading from the N-terminus, the 842-residue chain is Translation initiation factor IF-2 (842 aa).

The disordered stretch occupies residues 94–259 (QRSPEEIQAE…HGFQNPTGPV (166 aa)). Basic and acidic residues predominate over residues 96–138 (SPEEIQAEQKRELDERRAAENAARDKVEAEVRQRNEEQARRQA). Over residues 139-148 (ADSAVAAPAP) the composition is skewed to low complexity. Residues 149–159 (AAKPEPAPAAA) show a composition bias toward pro residues. Residues 160–172 (PAPVVADAPASED) show a composition bias toward low complexity. Composition is skewed to basic and acidic residues over residues 173 to 202 (AAAR…RGEA) and 226 to 235 (TTDEESDGAR). The segment covering 236-249 (RGRGGKGKLKKRNQ) has biased composition (basic residues). The 168-residue stretch at 342–509 (SRAPVVTVMG…AVLLQAEILE (168 aa)) folds into the tr-type G domain. The interval 351 to 358 (GHVDHGKT) is G1. 351–358 (GHVDHGKT) contributes to the GTP binding site. The segment at 376 to 380 (GITQH) is G2. The G3 stretch occupies residues 397-400 (DTPG). GTP-binding positions include 397-401 (DTPGH) and 451-454 (NKID). Residues 451 to 454 (NKID) form a G4 region. Residues 487 to 489 (SAK) form a G5 region.

This sequence belongs to the TRAFAC class translation factor GTPase superfamily. Classic translation factor GTPase family. IF-2 subfamily.

Its subcellular location is the cytoplasm. Its function is as follows. One of the essential components for the initiation of protein synthesis. Protects formylmethionyl-tRNA from spontaneous hydrolysis and promotes its binding to the 30S ribosomal subunits. Also involved in the hydrolysis of GTP during the formation of the 70S ribosomal complex. The sequence is that of Translation initiation factor IF-2 from Pseudomonas putida (strain GB-1).